Reading from the N-terminus, the 156-residue chain is 6,7-dimethyl-8-ribityllumazine synthase (156 aa).

5-amino-6-(D-ribitylamino)uracil-binding positions include F25, 59-61, and 83-85; these read AWE and AVI. (2S)-2-hydroxy-3-oxobutyl phosphate is bound at residue 88–89; it reads ST. Catalysis depends on H91, which acts as the Proton donor. N116 contacts 5-amino-6-(D-ribitylamino)uracil. R130 serves as a coordination point for (2S)-2-hydroxy-3-oxobutyl phosphate.

Belongs to the DMRL synthase family. As to quaternary structure, forms an icosahedral capsid composed of 60 subunits, arranged as a dodecamer of pentamers.

It catalyses the reaction (2S)-2-hydroxy-3-oxobutyl phosphate + 5-amino-6-(D-ribitylamino)uracil = 6,7-dimethyl-8-(1-D-ribityl)lumazine + phosphate + 2 H2O + H(+). The protein operates within cofactor biosynthesis; riboflavin biosynthesis; riboflavin from 2-hydroxy-3-oxobutyl phosphate and 5-amino-6-(D-ribitylamino)uracil: step 1/2. Functionally, catalyzes the formation of 6,7-dimethyl-8-ribityllumazine by condensation of 5-amino-6-(D-ribitylamino)uracil with 3,4-dihydroxy-2-butanone 4-phosphate. This is the penultimate step in the biosynthesis of riboflavin. This Acinetobacter baylyi (strain ATCC 33305 / BD413 / ADP1) protein is 6,7-dimethyl-8-ribityllumazine synthase.